The primary structure comprises 260 residues: Acetylglutamate kinase (260 aa).

Substrate contacts are provided by residues 45-46 (GG), Arg-67, and Asn-159.

The protein belongs to the acetylglutamate kinase family. ArgB subfamily.

It localises to the cytoplasm. It catalyses the reaction N-acetyl-L-glutamate + ATP = N-acetyl-L-glutamyl 5-phosphate + ADP. The protein operates within amino-acid biosynthesis; L-arginine biosynthesis; N(2)-acetyl-L-ornithine from L-glutamate: step 2/4. Catalyzes the ATP-dependent phosphorylation of N-acetyl-L-glutamate. The chain is Acetylglutamate kinase from Aliivibrio fischeri (strain ATCC 700601 / ES114) (Vibrio fischeri).